Consider the following 585-residue polypeptide: UvrABC system protein C (585 aa).

Residues 15-90 (AEPGVYQFLE…IKRHQPRYNV (76 aa)) form the GIY-YIG domain. The 36-residue stretch at 198–233 (GILADPLRQEMQAAATAEEFERAANIRDRLAVIESF) folds into the UVR domain.

It belongs to the UvrC family. As to quaternary structure, interacts with UvrB in an incision complex.

The protein resides in the cytoplasm. The UvrABC repair system catalyzes the recognition and processing of DNA lesions. UvrC both incises the 5' and 3' sides of the lesion. The N-terminal half is responsible for the 3' incision and the C-terminal half is responsible for the 5' incision. The chain is UvrABC system protein C from Haloquadratum walsbyi (strain DSM 16790 / HBSQ001).